The primary structure comprises 73 residues: uncharacterized protein (73 aa).

An N-terminal signal peptide occupies residues 1–23 (MLHLIKMVSKIVLLITLVFIVSA).

This is an uncharacterized protein from Acheta domesticus (House cricket).